Here is a 41-residue protein sequence, read N- to C-terminus: Photosystem II reaction center protein J (41 aa).

The chain crosses the membrane as a helical span at residues 9-29; sequence IPLWFVGMVGGLAALGLLAIF.

The protein belongs to the PsbJ family. As to quaternary structure, PSII is composed of 1 copy each of membrane proteins PsbA, PsbB, PsbC, PsbD, PsbE, PsbF, PsbH, PsbI, PsbJ, PsbK, PsbL, PsbM, PsbT, PsbX, PsbY, PsbZ, Psb30/Ycf12, at least 3 peripheral proteins of the oxygen-evolving complex and a large number of cofactors. It forms dimeric complexes.

Its subcellular location is the plastid. The protein localises to the chloroplast thylakoid membrane. One of the components of the core complex of photosystem II (PSII). PSII is a light-driven water:plastoquinone oxidoreductase that uses light energy to abstract electrons from H(2)O, generating O(2) and a proton gradient subsequently used for ATP formation. It consists of a core antenna complex that captures photons, and an electron transfer chain that converts photonic excitation into a charge separation. This Ostreococcus tauri protein is Photosystem II reaction center protein J.